A 207-amino-acid chain; its full sequence is Thymidylate kinase (207 aa).

7-14 (GCEGSGKS) provides a ligand contact to ATP.

This sequence belongs to the thymidylate kinase family.

The enzyme catalyses dTMP + ATP = dTDP + ADP. Phosphorylation of dTMP to form dTDP in both de novo and salvage pathways of dTTP synthesis. This chain is Thymidylate kinase, found in Chlamydia felis (strain Fe/C-56) (Chlamydophila felis).